Reading from the N-terminus, the 479-residue chain is Sucrose-6-phosphate hydrolase (479 aa).

The tract at residues 1 to 28 is disordered; that stretch reads MTAHDQELRRRAYEEVEKKEPIANSDPH. Residues 40 to 43, Gln-59, 102 to 103, 161 to 162, and Glu-220 contribute to the substrate site; these read LLND, YS, and RD. Asp-43 is an active-site residue.

This sequence belongs to the glycosyl hydrolase 32 family.

The catalysed reaction is Hydrolysis of terminal non-reducing beta-D-fructofuranoside residues in beta-D-fructofuranosides.. The protein operates within glycan biosynthesis; sucrose metabolism. The sequence is that of Sucrose-6-phosphate hydrolase (sacA) from Bacillus subtilis (strain 168).